Here is a 95-residue protein sequence, read N- to C-terminus: Nodulin (95 aa).

This is Nodulin from Striga hermonthica (Purple witchweed).